A 310-amino-acid polypeptide reads, in one-letter code: Cytochrome f (310 aa).

A signal peptide spans 1-23; that stretch reads MRRLIPILLGSLVLSLSILVAPA. Heme is bound by residues Y28, C48, C51, and H52. Residues 277–297 traverse the membrane as a helical segment; the sequence is IYGLLAFFVAVSLAQILLVLK.

Belongs to the cytochrome f family. As to quaternary structure, the 4 large subunits of the cytochrome b6-f complex are cytochrome b6, subunit IV (17 kDa polypeptide, PetD), cytochrome f and the Rieske protein, while the 4 small subunits are PetG, PetL, PetM and PetN. The complex functions as a dimer. Requires heme as cofactor.

The protein localises to the cellular thylakoid membrane. In terms of biological role, component of the cytochrome b6-f complex, which mediates electron transfer between photosystem II (PSII) and photosystem I (PSI), cyclic electron flow around PSI, and state transitions. In Prochlorococcus marinus (strain MIT 9303), this protein is Cytochrome f.